The primary structure comprises 445 residues: Squalene synthase (445 aa).

A run of 2 helical transmembrane segments spans residues 291–311 and 405–425; these read STFT…DLVY and LIVC…IAYV.

Belongs to the phytoene/squalene synthase family. The cofactor is Mg(2+).

It localises to the endoplasmic reticulum membrane. The enzyme catalyses 2 (2E,6E)-farnesyl diphosphate + NADPH + H(+) = squalene + 2 diphosphate + NADP(+). It carries out the reaction 2 (2E,6E)-farnesyl diphosphate + NADH + H(+) = squalene + 2 diphosphate + NAD(+). Its pathway is terpene metabolism; lanosterol biosynthesis; lanosterol from farnesyl diphosphate: step 1/3. Its function is as follows. Catalyzes the condensation of 2 two farnesyl pyrophosphate moieties to form squalene. It is the first committed enzyme of the sterol biosynthesis pathway. Required for the biosynthesis of ergosterol. The chain is Squalene synthase (SQS1) from Yarrowia lipolytica (strain CLIB 122 / E 150) (Yeast).